Consider the following 257-residue polypeptide: Undecaprenyl-diphosphatase (257 aa).

Helical transmembrane passes span 42 to 62 (YVLF…YMFL), 76 to 96 (IFHI…LKPI), 103 to 123 (PQYL…GVYF), 136 to 156 (CLTI…RSGA), 172 to 192 (IQFS…LEIW), 209 to 229 (QFLT…WAVI), and 237 to 257 (WVYF…YFQM).

The protein belongs to the UppP family.

Its subcellular location is the cell inner membrane. It catalyses the reaction di-trans,octa-cis-undecaprenyl diphosphate + H2O = di-trans,octa-cis-undecaprenyl phosphate + phosphate + H(+). Its function is as follows. Catalyzes the dephosphorylation of undecaprenyl diphosphate (UPP). Confers resistance to bacitracin. This Protochlamydia amoebophila (strain UWE25) protein is Undecaprenyl-diphosphatase.